We begin with the raw amino-acid sequence, 145 residues long: D-aminoacyl-tRNA deacylase (145 aa).

The Gly-cisPro motif, important for rejection of L-amino acids signature appears at 137–138 (GP).

The protein belongs to the DTD family. In terms of assembly, homodimer.

The protein resides in the cytoplasm. The catalysed reaction is glycyl-tRNA(Ala) + H2O = tRNA(Ala) + glycine + H(+). The enzyme catalyses a D-aminoacyl-tRNA + H2O = a tRNA + a D-alpha-amino acid + H(+). An aminoacyl-tRNA editing enzyme that deacylates mischarged D-aminoacyl-tRNAs. Also deacylates mischarged glycyl-tRNA(Ala), protecting cells against glycine mischarging by AlaRS. Acts via tRNA-based rather than protein-based catalysis; rejects L-amino acids rather than detecting D-amino acids in the active site. By recycling D-aminoacyl-tRNA to D-amino acids and free tRNA molecules, this enzyme counteracts the toxicity associated with the formation of D-aminoacyl-tRNA entities in vivo and helps enforce protein L-homochirality. This chain is D-aminoacyl-tRNA deacylase, found in Shewanella denitrificans (strain OS217 / ATCC BAA-1090 / DSM 15013).